Consider the following 859-residue polypeptide: Active breakpoint cluster region-related protein (859 aa).

A disordered region spans residues 26–84 (TDEYDGEGNEEQKGPPEGSETMPYIDESPTMSPQLSARSQGGGDGVSPTPPEGLAPGVE). The segment covering 54-64 (PTMSPQLSARS) has biased composition (polar residues). Ser-57 bears the Phosphoserine mark. One can recognise a DH domain in the interval 91 to 284 (MRKLVLSGFL…QNFLSSINED (194 aa)). A PH domain is found at 301–459 (QLVKDGFLVE…WREAIQKLQK (159 aa)). In terms of domain architecture, C2 spans 484–613 (TVHNIPVTSN…ETKNWHTDVI (130 aa)). The Rho-GAP domain maps to 647 to 845 (VKISVVTKRE…YYLQHPPISF (199 aa)).

As to quaternary structure, interacts with DLG4. As to expression, highly enriched in the brain. Much weaker expression in heart, lung and muscle.

It is found in the cell projection. The protein resides in the dendritic spine. Its subcellular location is the axon. It localises to the synapse. Functionally, protein with a unique structure having two opposing regulatory activities toward small GTP-binding proteins. The C-terminus is a GTPase-activating protein domain which stimulates GTP hydrolysis by RAC1, RAC2 and CDC42. Accelerates the intrinsic rate of GTP hydrolysis of RAC1 or CDC42, leading to down-regulation of the active GTP-bound form. The central Dbl homology (DH) domain functions as a guanine nucleotide exchange factor (GEF) that modulates the GTPases CDC42, RHOA and RAC1. Promotes the conversion of CDC42, RHOA and RAC1 from the GDP-bound to the GTP-bound form. Functions as an important negative regulator of neuronal RAC1 activity. Regulates macrophage functions such as CSF-1 directed motility and phagocytosis through the modulation of RAC1 activity. The polypeptide is Active breakpoint cluster region-related protein (Homo sapiens (Human)).